Reading from the N-terminus, the 175-residue chain is Large ribosomal subunit protein uL6 (175 aa).

The protein belongs to the universal ribosomal protein uL6 family. In terms of assembly, part of the 50S ribosomal subunit.

Its function is as follows. This protein binds to the 23S rRNA, and is important in its secondary structure. It is located near the subunit interface in the base of the L7/L12 stalk, and near the tRNA binding site of the peptidyltransferase center. The protein is Large ribosomal subunit protein uL6 of Xylella fastidiosa (strain 9a5c).